The following is a 1263-amino-acid chain: Histone-lysine N-methyltransferase EHMT2 (1263 aa).

Disordered stretches follow at residues 1–314 (MRGL…LEEW) and 332–439 (DERV…EYME). Residues 26-39 (GRGRGGAHRGRGRP) show a composition bias toward basic residues. Residue Arg40 is modified to Asymmetric dimethylarginine. Over residues 83-95 (LEKEPRGAAERVH) the composition is skewed to basic and acidic residues. At Ser97 the chain carries Phosphoserine. Thr101 carries the post-translational modification Phosphothreonine. Phosphoserine occurs at positions 104 and 193. Lys239 bears the N6,N6,N6-trimethyllysine; by EHMT2; alternate mark. Lys239 is modified (N6,N6-dimethyllysine; by EHMT2; alternate). Residues 252–270 (PEKRPPEVQHFRMSDDMHL) show a composition bias toward basic and acidic residues. Glycyl lysine isopeptide (Lys-Gly) (interchain with G-Cter in SUMO2) cross-links involve residues Lys272 and Lys282. Ser285, Ser294, and Ser298 each carry phosphoserine. Basic and acidic residues-rich tracts occupy residues 302 to 312 (ILEKGEPRPLE) and 332 to 343 (DERVDSDSKSEV). The segment covering 350–380 (LSEEEEEEEEEEEEEEEEEEEEEEEEEDEES) has biased composition (acidic residues). The segment covering 391-400 (GRRKAKKKWR) has biased composition (basic residues). Ser403, Ser465, and Ser466 each carry phosphoserine. The residue at position 608 (Thr608) is a Phosphothreonine. Residues 621–647 (LAHDAPGRADTSQPSARMRGHGEPRRP) form a disordered region. Lys687 participates in a covalent cross-link: Glycyl lysine isopeptide (Lys-Gly) (interchain with G-Cter in SUMO2). ANK repeat units lie at residues 702–731 (FHPRQLYLSVKQGELQKVILMLLDNLDPNF), 737–766 (SKRTPLHAAAQKGSVEICHVLLQAGANINA), 770–799 (QQRTPLMEAVVNNHLEVARYMVQLGGCVYS), 803–833 (DGSTCLHHAAKIGNLEMVSLLLSTGQVDVNA), 837–866 (GGWTPIIWAAEHKHIDVIRMLLTRGADVTL), 870–899 (EENICLHWASFTGSAAIAEVLLNAQCDLHA), and 903–932 (HGDTPLHIAARESYHDCVLLFLSRGANPEL). Residues 870–872 (EEN) form a histone H3K9me binding region. Positions 1025–1088 (QHCTCVDDCS…SCKNRVVQSG (64 aa)) constitute a Pre-SET domain. Cys1027, Cys1029, Cys1033, Cys1038, Cys1040, Cys1070, Cys1074, Cys1076, and Cys1080 together coordinate Zn(2+). In terms of domain architecture, SET spans 1091-1208 (VRLQLYRTAK…TGEELGFDYG (118 aa)). S-adenosyl-L-methionine-binding positions include 1101-1103 (MGW), Tyr1138, and 1165-1166 (NH). The interval 1127 to 1146 (DAEADVREDDSYLFDLDNKD) is interaction with histone H3. Cys1168 serves as a coordination point for Zn(2+). The interaction with histone H3 stretch occupies residues 1207–1210 (YGDR). Residues 1217 to 1233 (KYFTCQCGSEKCKHSAE) enclose the Post-SET domain. The Zn(2+) site is built by Cys1221, Cys1223, and Cys1228. Phosphoserine is present on Ser1257. Thr1263 carries the phosphothreonine modification.

It belongs to the class V-like SAM-binding methyltransferase superfamily. Histone-lysine methyltransferase family. Suvar3-9 subfamily. Heterodimer; heterodimerizes with EHMT1/GLP. Interacts with GFI1B and WIZ. Part of the E2F6.com-1 complex in G0 phase composed of E2F6, MGA, MAX, TFDP1, CBX3, BAT8, EHMT1, RING1, RNF2, MBLR, L3MBTL2 and YAF2. Part of a complex composed of TRIM28, HDAC1, HDAC2 and EHMT2. Interacts with UHRF1. Interacts with CDYL. Interacts with REST only in the presence of CDYL. Part of a complex containing at least CDYL, REST, WIZ, SETB1, EHMT1 and EHMT2. Interacts with PRDM9 and CDYL; interaction only takes place when PRDM9 is bound to hotspot DNA. Interacts with SMYD5. In terms of processing, methylated at Lys-239; automethylated. Ubiquitous.

The protein resides in the nucleus. The protein localises to the chromosome. The enzyme catalyses N(6)-methyl-L-lysyl(9)-[histone H3] + S-adenosyl-L-methionine = N(6),N(6)-dimethyl-L-lysyl(9)-[histone H3] + S-adenosyl-L-homocysteine + H(+). It catalyses the reaction L-lysyl(9)-[histone H3] + S-adenosyl-L-methionine = N(6)-methyl-L-lysyl(9)-[histone H3] + S-adenosyl-L-homocysteine + H(+). Histone methyltransferase that specifically mono- and dimethylates 'Lys-9' of histone H3 (H3K9me1 and H3K9me2, respectively) in euchromatin. H3K9me represents a specific tag for epigenetic transcriptional repression by recruiting HP1 proteins to methylated histones. Also mediates monomethylation of 'Lys-56' of histone H3 (H3K56me1) in G1 phase, leading to promote interaction between histone H3 and PCNA and regulating DNA replication. Also weakly methylates 'Lys-27' of histone H3 (H3K27me). Also required for DNA methylation, the histone methyltransferase activity is not required for DNA methylation, suggesting that these 2 activities function independently. Probably targeted to histone H3 by different DNA-binding proteins like E2F6, MGA, MAX and/or DP1. May also methylate histone H1. In addition to the histone methyltransferase activity, also methylates non-histone proteins: mediates dimethylation of 'Lys-373' of p53/TP53. Also methylates CDYL, WIZ, ACIN1, DNMT1, HDAC1, ERCC6, KLF12 and itself. This chain is Histone-lysine N-methyltransferase EHMT2 (Ehmt2), found in Mus musculus (Mouse).